The following is a 919-amino-acid chain: uncharacterized protein (919 aa).

The span at 1–15 (MEALILLSSQQSGSI) shows a compositional bias: low complexity. Disordered regions lie at residues 1 to 167 (MEAL…DLEN), 179 to 312 (RFKP…STPS), 415 to 491 (HIYE…RLSL), 553 to 739 (QQQQ…TIKP), 751 to 863 (THNE…NNII), and 883 to 906 (LNIN…DHIN). Over residues 16–25 (KNNCASTSDI) the composition is skewed to polar residues. Low complexity-rich tracts occupy residues 34 to 75 (IVIV…SSSS), 96 to 107 (SSPSSSPNTPKT), and 141 to 153 (TPTT…TPIK). The segment covering 154–167 (PVKDPKEKEKDLEN) has biased composition (basic and acidic residues). Residues 186 to 292 (NNTNNNNNIN…QQSSPTSSQT (107 aa)) show a composition bias toward low complexity. The span at 420-433 (PNENNNGGSFQKPN) shows a compositional bias: polar residues. Composition is skewed to low complexity over residues 450-471 (GVSG…PSHP), 553-564 (QQQQQQQQQSSS), 573-589 (SQPQ…QTPQ), and 618-635 (HMPQ…MPHS). Residues 678-695 (YGSSPNLNGGKGSNNFLQ) show a composition bias toward polar residues. Low complexity predominate over residues 712–723 (SSVDSYSNSSPT). Residues 754-768 (ENYMSSPRQPLSPHN) are compositionally biased toward polar residues. Basic and acidic residues predominate over residues 785–797 (PHEHCNYIDKNDE). Low complexity predominate over residues 798 to 863 (YYSNNNNNNN…NNNNNNNNII (66 aa)). A compositionally biased stretch (polar residues) spans 883–899 (LNINHQDGPNSASSTPR).

This is an uncharacterized protein from Dictyostelium discoideum (Social amoeba).